We begin with the raw amino-acid sequence, 408 residues long: Homogentisate geranylgeranyltransferase (408 aa).

Residues 1–62 constitute a chloroplast transit peptide; sequence MQAVTAAAAA…TVMHKFSAIS (62 aa). Helical transmembrane passes span 122 to 142, 156 to 176, 194 to 214, 221 to 241, 248 to 268, 286 to 306, 329 to 349, 352 to 372, and 386 to 406; these read HTIFGTIIGITSVSLLPMKSI, ALTAALCMNIYVVGLNQLYDI, SVATGVFLVLAFLIMSFSIGI, LMCALIVSFLLGSAYSIEAPF, ALLAASCILFVRAILVQLAFF, LVFATLFMCCFSAVIALFKDI, VYQLCISILLTAYGAATLVGA, TNLFQKIITVSGHGLLALTLW, and VTSFYMFIWKLFYAEYFLIPF.

This sequence belongs to the UbiA prenyltransferase family. In terms of tissue distribution, expressed in seeds.

The protein localises to the plastid. Its subcellular location is the chloroplast membrane. It catalyses the reaction homogentisate + (2E,6E,10E)-geranylgeranyl diphosphate + H(+) = 6-geranylgeranyl-2-methylbenzene-1,4-diol + CO2 + diphosphate. Its pathway is cofactor biosynthesis; tocopherol biosynthesis. Functionally, involved in the synthesis of tocotrienol (vitamin E). Catalyzes the condensation of homogentisate and geranylgeranyl diphosphate to form 2-methyl-6-geranylgeranylbenzoquinol. Possesses low activity with phytyl diphosphate as substrate. This is Homogentisate geranylgeranyltransferase from Hordeum vulgare (Barley).